The chain runs to 203 residues: MFIVVEGGEGAGKTQFTQALSKRLMEEGKEVVLTREPGGSALGEQLRDLVLDVTQEISSYAELLLFLAARAQHIQEKILPALESGKTVICDRFHDSTIVYQGIAGGLGEAFVTDLCYRVVGDEPFLPDITFLLDLPEKEGLLRKTRQKNLDRFEQKPTSFHRAAREGFISLAERSPDRYKILDALLPTEVSVDQALLQIRALI.

7-14 (GGEGAGKT) is a binding site for ATP.

This sequence belongs to the thymidylate kinase family.

It carries out the reaction dTMP + ATP = dTDP + ADP. In terms of biological role, phosphorylation of dTMP to form dTDP in both de novo and salvage pathways of dTTP synthesis. The sequence is that of Thymidylate kinase (tmk) from Chlamydia muridarum (strain MoPn / Nigg).